Here is a 236-residue protein sequence, read N- to C-terminus: Ubiquinone biosynthesis O-methyltransferase (236 aa).

Positions 39, 59, 80, and 124 each coordinate S-adenosyl-L-methionine.

This sequence belongs to the methyltransferase superfamily. UbiG/COQ3 family.

It catalyses the reaction a 3-demethylubiquinol + S-adenosyl-L-methionine = a ubiquinol + S-adenosyl-L-homocysteine + H(+). It carries out the reaction a 3-(all-trans-polyprenyl)benzene-1,2-diol + S-adenosyl-L-methionine = a 2-methoxy-6-(all-trans-polyprenyl)phenol + S-adenosyl-L-homocysteine + H(+). Its pathway is cofactor biosynthesis; ubiquinone biosynthesis. Its function is as follows. O-methyltransferase that catalyzes the 2 O-methylation steps in the ubiquinone biosynthetic pathway. In Shewanella oneidensis (strain ATCC 700550 / JCM 31522 / CIP 106686 / LMG 19005 / NCIMB 14063 / MR-1), this protein is Ubiquinone biosynthesis O-methyltransferase.